Here is a 1364-residue protein sequence, read N- to C-terminus: DNA-directed RNA polymerase subunit beta' (1364 aa).

Zn(2+)-binding residues include Cys250, Cys317, Cys324, and Cys327. The segment at Thr1318 to Lys1342 is disordered.

This sequence belongs to the RNA polymerase beta' chain family. RpoC2 subfamily. In cyanobacteria the RNAP catalytic core is composed of 2 alpha, 1 beta, 1 beta', 1 gamma and 1 omega subunit. When a sigma factor is associated with the core the holoenzyme is formed, which can initiate transcription. It depends on Zn(2+) as a cofactor.

It catalyses the reaction RNA(n) + a ribonucleoside 5'-triphosphate = RNA(n+1) + diphosphate. Its function is as follows. DNA-dependent RNA polymerase catalyzes the transcription of DNA into RNA using the four ribonucleoside triphosphates as substrates. The polypeptide is DNA-directed RNA polymerase subunit beta' (Synechococcus sp. (strain CC9902)).